The following is a 476-amino-acid chain: Glycogen synthase (476 aa).

Lys15 contacts ADP-alpha-D-glucose.

Belongs to the glycosyltransferase 1 family. Bacterial/plant glycogen synthase subfamily.

It catalyses the reaction [(1-&gt;4)-alpha-D-glucosyl](n) + ADP-alpha-D-glucose = [(1-&gt;4)-alpha-D-glucosyl](n+1) + ADP + H(+). The protein operates within glycan biosynthesis; glycogen biosynthesis. Functionally, synthesizes alpha-1,4-glucan chains using ADP-glucose. In Lactobacillus acidophilus (strain ATCC 700396 / NCK56 / N2 / NCFM), this protein is Glycogen synthase.